A 566-amino-acid polypeptide reads, in one-letter code: E3 ubiquitin-protein ligase RNF220 (566 aa).

Residue Lys277 forms a Glycyl lysine isopeptide (Lys-Gly) (interchain with G-Cter in SUMO2) linkage. The interval 277–297 is disordered; the sequence is KREGESPTASPHSSATDDLHH. Phosphoserine is present on Ser390. Residues 485–513 adopt a coiled-coil conformation; the sequence is EDSAVTTFEALKARVRELERQLSRGDRYK. The segment at 514-522 is required for targeting to the cytoplasm; that stretch reads CLICMDSYS. The segment at 514–553 adopts an RING-type zinc-finger fold; it reads CLICMDSYSMPLTSIQCWHVHCEECWLRTLGAKKLCPQCN.

Interacts with SIN3B. Interacts with CTNNB1 (via Armadillo repeats 2-8). Interacts with USP7 (via MATH domain). Auto-ubiquitinated; leads to proteasomal degradation.

It is found in the cytoplasm. The protein localises to the nucleus. It catalyses the reaction S-ubiquitinyl-[E2 ubiquitin-conjugating enzyme]-L-cysteine + [acceptor protein]-L-lysine = [E2 ubiquitin-conjugating enzyme]-L-cysteine + N(6)-ubiquitinyl-[acceptor protein]-L-lysine.. The protein operates within protein modification; protein ubiquitination. Functionally, E3 ubiquitin-protein ligase that promotes the ubiquitination and proteasomal degradation of SIN3B. Independently of its E3 ligase activity, acts as a CTNNB1 stabilizer through USP7-mediated deubiquitination of CTNNB1 and promotes Wnt signaling. Plays a critical role in the regulation of nuclear lamina. In Macaca fascicularis (Crab-eating macaque), this protein is E3 ubiquitin-protein ligase RNF220 (RNF220).